We begin with the raw amino-acid sequence, 1174 residues long: Lysylphosphatidylglycerol biosynthesis bifunctional protein LysX (1174 aa).

Residues 1–665 (MGVGLHLTVP…LLHHDGSAPD (665 aa)) are phosphatidylglycerol lysyltransferase. Positions 9 to 36 (VPGLRRDGRGVQSNSHDTSSKTTADISR) are disordered. The segment covering 19-33 (VQSNSHDTSSKTTAD) has biased composition (polar residues). 7 helical membrane passes run 82–102 (VPAA…LASV), 124–144 (FPDT…ALTA), 148–168 (IAWL…AAEI), 179–199 (FGEN…VLGY), 216–236 (AVWL…VELF), 274–294 (AIFG…LFLS), and 614–634 (VIPR…LPFS). A lysine--tRNA ligase region spans residues 666–1174 (VSGLRQVGLT…TLPFPLAKPH (509 aa)). Positions 728 to 806 (VSVSGRIMRI…SLIVSGWRLI (79 aa)) form a DNA-binding region, OB. Mg(2+)-binding residues include Asp1086 and Glu1093.

In the N-terminal section; belongs to the LPG synthetase family. It in the C-terminal section; belongs to the class-II aminoacyl-tRNA synthetase family. Requires Mg(2+) as cofactor.

The protein localises to the cell membrane. It carries out the reaction tRNA(Lys) + L-lysine + ATP = L-lysyl-tRNA(Lys) + AMP + diphosphate. The catalysed reaction is L-lysyl-tRNA(Lys) + a 1,2-diacyl-sn-glycero-3-phospho-(1'-sn-glycerol) = a 1,2-diacyl-sn-glycero-3-phospho-1'-(3'-O-L-lysyl)-sn-glycerol + tRNA(Lys). Functionally, catalyzes the production of L-lysyl-tRNA(Lys)transfer and the transfer of a lysyl group from L-lysyl-tRNA(Lys) to membrane-bound phosphatidylglycerol (PG), which produces lysylphosphatidylglycerol (LPG), one of the components of the bacterial membrane with a positive net charge. LPG synthesis contributes to the resistance to cationic antimicrobial peptides (CAMPs) and likely protects M.tuberculosis against the CAMPs produced by competiting microorganisms (bacteriocins). In fact, the modification of anionic phosphatidylglycerol with positively charged L-lysine results in repulsion of the peptides. This chain is Lysylphosphatidylglycerol biosynthesis bifunctional protein LysX (lysX), found in Mycobacterium tuberculosis (strain KZN 1435 / MDR).